Reading from the N-terminus, the 173-residue chain is Shikimate kinase 1 (173 aa).

14–19 (GAGKST) serves as a coordination point for ATP. Serine 18 is a binding site for Mg(2+). Substrate is bound by residues aspartate 36, arginine 60, and glycine 82. Residue arginine 120 coordinates ATP. Arginine 140 contributes to the substrate binding site. Glutamine 157 provides a ligand contact to ATP.

It belongs to the shikimate kinase family. In terms of assembly, monomer. It depends on Mg(2+) as a cofactor.

Its subcellular location is the cytoplasm. It carries out the reaction shikimate + ATP = 3-phosphoshikimate + ADP + H(+). It participates in metabolic intermediate biosynthesis; chorismate biosynthesis; chorismate from D-erythrose 4-phosphate and phosphoenolpyruvate: step 5/7. Its function is as follows. Catalyzes the specific phosphorylation of the 3-hydroxyl group of shikimic acid using ATP as a cosubstrate. The chain is Shikimate kinase 1 from Pectobacterium atrosepticum (strain SCRI 1043 / ATCC BAA-672) (Erwinia carotovora subsp. atroseptica).